The chain runs to 80 residues: Metallothionein-like protein type 2 MET1 (80 aa).

This sequence belongs to the metallothionein superfamily. Type 15 family.

Metallothioneins have a high content of cysteine residues that bind various heavy metals. The sequence is that of Metallothionein-like protein type 2 MET1 (MET1) from Fragaria ananassa (Strawberry).